Reading from the N-terminus, the 179-residue chain is Guanosine-3',5'-bis(diphosphate) 3'-pyrophosphohydrolase MESH1 (179 aa).

G2 carries the post-translational modification N-acetylglycine. K25 carries the N6-acetyllysine modification. The HD domain maps to 32 to 127; that stretch reads YINHPIGVAR…VKLADKLYNL (96 aa). H35, H61, and D62 together coordinate Mn(2+). Residues E65 and D66 each act as nucleophile in the active site. K97 bears the N6-acetyllysine mark. Residue D122 coordinates Mn(2+). K123 bears the N6-acetyllysine mark.

This sequence belongs to the MESH1 family. It depends on Mn(2+) as a cofactor.

It carries out the reaction guanosine 3',5'-bis(diphosphate) + H2O = GDP + diphosphate + H(+). PpGpp hydrolyzing enzyme involved in starvation response. This is Guanosine-3',5'-bis(diphosphate) 3'-pyrophosphohydrolase MESH1 (Hddc3) from Mus musculus (Mouse).